The chain runs to 170 residues: Transcription factor E (170 aa).

Residues 1–93 (MKEAYLYIVE…TWYVDDEIIR (93 aa)) form the HTH TFE/IIEalpha-type domain.

It belongs to the TFE family. Monomer. Interaction with RNA polymerase subunits RpoF and RpoE is necessary for Tfe stimulatory transcription activity. Able to interact with Tbp and RNA polymerase in the absence of DNA promoter. Interacts both with the preinitiation and elongation complexes.

In terms of biological role, transcription factor that plays a role in the activation of archaeal genes transcribed by RNA polymerase. Facilitates transcription initiation by enhancing TATA-box recognition by TATA-box-binding protein (Tbp), and transcription factor B (Tfb) and RNA polymerase recruitment. Not absolutely required for transcription in vitro, but particularly important in cases where Tbp or Tfb function is not optimal. It dynamically alters the nucleic acid-binding properties of RNA polymerases by stabilizing the initiation complex and destabilizing elongation complexes. Seems to translocate with the RNA polymerase following initiation and acts by binding to the non template strand of the transcription bubble in elongation complexes. This Pyrobaculum islandicum (strain DSM 4184 / JCM 9189 / GEO3) protein is Transcription factor E.